The chain runs to 129 residues: Lysozyme C (129 aa).

A C-type lysozyme domain is found at 1–129 (KVYGRCELAA…VNAWTRGCRL (129 aa)). Cystine bridges form between Cys-6–Cys-127, Cys-30–Cys-115, Cys-64–Cys-80, and Cys-76–Cys-94. Residues Glu-35 and Asp-52 contribute to the active site.

It belongs to the glycosyl hydrolase 22 family. In terms of assembly, monomer.

It is found in the secreted. The catalysed reaction is Hydrolysis of (1-&gt;4)-beta-linkages between N-acetylmuramic acid and N-acetyl-D-glucosamine residues in a peptidoglycan and between N-acetyl-D-glucosamine residues in chitodextrins.. In terms of biological role, lysozymes have primarily a bacteriolytic function; those in tissues and body fluids are associated with the monocyte-macrophage system and enhance the activity of immunoagents. The polypeptide is Lysozyme C (LYZ) (Syrmaticus soemmerringii (Copper pheasant)).